Consider the following 267-residue polypeptide: PF03932 family protein CutC (267 aa).

This sequence belongs to the CutC family.

It is found in the cytoplasm. This chain is PF03932 family protein CutC, found in Xylella fastidiosa (strain Temecula1 / ATCC 700964).